The primary structure comprises 188 residues: UPF0340 protein GK3370 (188 aa).

This sequence belongs to the UPF0340 family.

This is UPF0340 protein GK3370 from Geobacillus kaustophilus (strain HTA426).